The sequence spans 341 residues: UDP-3-O-acylglucosamine N-acyltransferase (341 aa).

Catalysis depends on His239, which acts as the Proton acceptor.

It belongs to the transferase hexapeptide repeat family. LpxD subfamily. In terms of assembly, homotrimer.

The catalysed reaction is a UDP-3-O-[(3R)-3-hydroxyacyl]-alpha-D-glucosamine + a (3R)-hydroxyacyl-[ACP] = a UDP-2-N,3-O-bis[(3R)-3-hydroxyacyl]-alpha-D-glucosamine + holo-[ACP] + H(+). It functions in the pathway bacterial outer membrane biogenesis; LPS lipid A biosynthesis. Catalyzes the N-acylation of UDP-3-O-acylglucosamine using 3-hydroxyacyl-ACP as the acyl donor. Is involved in the biosynthesis of lipid A, a phosphorylated glycolipid that anchors the lipopolysaccharide to the outer membrane of the cell. In Shewanella sp. (strain MR-4), this protein is UDP-3-O-acylglucosamine N-acyltransferase.